We begin with the raw amino-acid sequence, 1411 residues long: DNA-directed RNA polymerase subunit beta' (1411 aa).

4 residues coordinate Zn(2+): Cys70, Cys72, Cys85, and Cys88. Mg(2+) is bound by residues Asp460, Asp462, and Asp464. 4 residues coordinate Zn(2+): Cys814, Cys888, Cys895, and Cys898.

The protein belongs to the RNA polymerase beta' chain family. The RNAP catalytic core consists of 2 alpha, 1 beta, 1 beta' and 1 omega subunit. When a sigma factor is associated with the core the holoenzyme is formed, which can initiate transcription. Mg(2+) is required as a cofactor. Requires Zn(2+) as cofactor.

The enzyme catalyses RNA(n) + a ribonucleoside 5'-triphosphate = RNA(n+1) + diphosphate. DNA-dependent RNA polymerase catalyzes the transcription of DNA into RNA using the four ribonucleoside triphosphates as substrates. The protein is DNA-directed RNA polymerase subunit beta' of Idiomarina loihiensis (strain ATCC BAA-735 / DSM 15497 / L2-TR).